The sequence spans 592 residues: Arginine--tRNA ligase (592 aa).

Residues 128–138 carry the 'HIGH' region motif; sequence ANPTGPLHVGH.

This sequence belongs to the class-I aminoacyl-tRNA synthetase family. As to quaternary structure, monomer.

The protein resides in the cytoplasm. The enzyme catalyses tRNA(Arg) + L-arginine + ATP = L-arginyl-tRNA(Arg) + AMP + diphosphate. In Hydrogenovibrio crunogenus (strain DSM 25203 / XCL-2) (Thiomicrospira crunogena), this protein is Arginine--tRNA ligase.